The primary structure comprises 455 residues: Bifunctional protein GlmU (455 aa).

Residues 1–229 (MLNSAMSVVI…ISETEGVNNR (229 aa)) form a pyrophosphorylase region. UDP-N-acetyl-alpha-D-glucosamine is bound by residues 11-14 (LAAG), K25, Q76, 81-82 (GT), 103-105 (YGD), G140, E154, N169, and N227. D105 contacts Mg(2+). N227 provides a ligand contact to Mg(2+). The linker stretch occupies residues 230–250 (LQLSRLERIYQAEQAEKLLLA). The tract at residues 251–455 (GVMLRDPARF…KQGWQRPVKK (205 aa)) is N-acetyltransferase. R333 and K351 together coordinate UDP-N-acetyl-alpha-D-glucosamine. H363 (proton acceptor) is an active-site residue. 2 residues coordinate UDP-N-acetyl-alpha-D-glucosamine: Y366 and N377. Acetyl-CoA contacts are provided by residues A380, 386 to 387 (NY), S405, A423, and R440.

It in the N-terminal section; belongs to the N-acetylglucosamine-1-phosphate uridyltransferase family. This sequence in the C-terminal section; belongs to the transferase hexapeptide repeat family. In terms of assembly, homotrimer. Mg(2+) serves as cofactor.

It is found in the cytoplasm. It catalyses the reaction alpha-D-glucosamine 1-phosphate + acetyl-CoA = N-acetyl-alpha-D-glucosamine 1-phosphate + CoA + H(+). The enzyme catalyses N-acetyl-alpha-D-glucosamine 1-phosphate + UTP + H(+) = UDP-N-acetyl-alpha-D-glucosamine + diphosphate. It functions in the pathway nucleotide-sugar biosynthesis; UDP-N-acetyl-alpha-D-glucosamine biosynthesis; N-acetyl-alpha-D-glucosamine 1-phosphate from alpha-D-glucosamine 6-phosphate (route II): step 2/2. Its pathway is nucleotide-sugar biosynthesis; UDP-N-acetyl-alpha-D-glucosamine biosynthesis; UDP-N-acetyl-alpha-D-glucosamine from N-acetyl-alpha-D-glucosamine 1-phosphate: step 1/1. It participates in bacterial outer membrane biogenesis; LPS lipid A biosynthesis. Catalyzes the last two sequential reactions in the de novo biosynthetic pathway for UDP-N-acetylglucosamine (UDP-GlcNAc). The C-terminal domain catalyzes the transfer of acetyl group from acetyl coenzyme A to glucosamine-1-phosphate (GlcN-1-P) to produce N-acetylglucosamine-1-phosphate (GlcNAc-1-P), which is converted into UDP-GlcNAc by the transfer of uridine 5-monophosphate (from uridine 5-triphosphate), a reaction catalyzed by the N-terminal domain. The polypeptide is Bifunctional protein GlmU (Salmonella arizonae (strain ATCC BAA-731 / CDC346-86 / RSK2980)).